Consider the following 238-residue polypeptide: NAD-dependent protein deacylase (238 aa).

Residues 1–237 (MRGIMKVFVL…PAWVERLLAR (237 aa)) form the Deacetylase sirtuin-type domain. NAD(+) is bound at residue 12–31 (GAGVSAESGLGTFRDKDGVW). Substrate contacts are provided by Y56 and R59. An NAD(+)-binding site is contributed by 94–97 (QNVD). Catalysis depends on H112, which acts as the Proton acceptor. Positions 120, 123, 139, and 142 each coordinate Zn(2+). NAD(+)-binding positions include 179 to 181 (GTS), 205 to 207 (NLE), and A223.

It belongs to the sirtuin family. Class III subfamily. It depends on Zn(2+) as a cofactor.

It is found in the cytoplasm. It carries out the reaction N(6)-acetyl-L-lysyl-[protein] + NAD(+) + H2O = 2''-O-acetyl-ADP-D-ribose + nicotinamide + L-lysyl-[protein]. The enzyme catalyses N(6)-succinyl-L-lysyl-[protein] + NAD(+) + H2O = 2''-O-succinyl-ADP-D-ribose + nicotinamide + L-lysyl-[protein]. NAD-dependent lysine deacetylase and desuccinylase that specifically removes acetyl and succinyl groups on target proteins. Modulates the activities of several proteins which are inactive in their acylated form. The chain is NAD-dependent protein deacylase from Caulobacter vibrioides (strain ATCC 19089 / CIP 103742 / CB 15) (Caulobacter crescentus).